The chain runs to 351 residues: Phenylalanine--tRNA ligase alpha subunit (351 aa).

Glu-276 serves as a coordination point for Mg(2+).

It belongs to the class-II aminoacyl-tRNA synthetase family. Phe-tRNA synthetase alpha subunit type 1 subfamily. As to quaternary structure, tetramer of two alpha and two beta subunits. Mg(2+) serves as cofactor.

The protein resides in the cytoplasm. The catalysed reaction is tRNA(Phe) + L-phenylalanine + ATP = L-phenylalanyl-tRNA(Phe) + AMP + diphosphate + H(+). In Psychrobacter arcticus (strain DSM 17307 / VKM B-2377 / 273-4), this protein is Phenylalanine--tRNA ligase alpha subunit.